The primary structure comprises 137 residues: Nucleoside diphosphate kinase (137 aa).

Residues K9, F57, R85, T91, R102, and N112 each coordinate ATP. The active-site Pros-phosphohistidine intermediate is H115.

The protein belongs to the NDK family. In terms of assembly, homotetramer. Mg(2+) serves as cofactor.

The protein localises to the cytoplasm. It carries out the reaction a 2'-deoxyribonucleoside 5'-diphosphate + ATP = a 2'-deoxyribonucleoside 5'-triphosphate + ADP. The catalysed reaction is a ribonucleoside 5'-diphosphate + ATP = a ribonucleoside 5'-triphosphate + ADP. Major role in the synthesis of nucleoside triphosphates other than ATP. The ATP gamma phosphate is transferred to the NDP beta phosphate via a ping-pong mechanism, using a phosphorylated active-site intermediate. This is Nucleoside diphosphate kinase from Thermus thermophilus (strain ATCC 27634 / DSM 579 / HB8).